The sequence spans 425 residues: Proteinase-activated receptor 1 (425 aa).

Positions 1 to 21 (MGPRRLLLVAACFSLCGPLLS) are cleaved as a signal peptide. Positions 22-41 (ARTRARRPESKATNATLDPR) are excised as a propeptide. N35, N62, and N75 each carry an N-linked (GlcNAc...) asparagine glycan. The Extracellular segment spans residues 42 to 102 (SFLLRNPNDK…SGYLTSSWLT (61 aa)). Residues 103 to 128 (LFVPSVYTGVFVVSLPLNIMAIVVFI) form a helical membrane-spanning segment. Residues 129 to 137 (LKMKVKKPA) lie on the Cytoplasmic side of the membrane. Residues 138-157 (VVYMLHLATADVLFVSVLPF) traverse the membrane as a helical segment. Residues 158–176 (KISYYFSGSDWQFGSELCR) are Extracellular-facing. C175 and C254 form a disulfide bridge. A helical membrane pass occupies residues 177 to 198 (FVTAAFYCNMYASILLMTVISI). Topologically, residues 199–218 (DRFLAVVYPMQSLSWRTLGR) are cytoplasmic. A helical transmembrane segment spans residues 219-239 (ASFTCLAIWALAIAGVVPLLL). Topologically, residues 240–268 (KEQTIQVPGLNITTCHDVLNETLLEGYYA) are extracellular. Residues N250 and N259 are each glycosylated (N-linked (GlcNAc...) asparagine). A helical membrane pass occupies residues 269–288 (YYFSAFSAVFFFVPLIISTV). At 289 to 311 (CYVSIIRCLSSSAVANRSKKSRA) the chain is on the cytoplasmic side. A helical transmembrane segment spans residues 312–334 (LFLSAAVFCIFIICFGPTNVLLI). The Extracellular segment spans residues 335–350 (AHYSFLSHTSTTEAAY). Residues 351–374 (FAYLLCVCVSSISCCIDPLIYYYA) traverse the membrane as a helical segment. Residues 375-425 (SSECQRYVYSILCCKESSDPSSYNSSGQLMASKMDTCSSNLNNSIYKKLLT) lie on the Cytoplasmic side of the membrane. Phosphoserine is present on S418.

It belongs to the G-protein coupled receptor 1 family. In terms of processing, proteolytic cleavage by thrombin generates a new N-terminus that functions as a tethered ligand. Also proteolytically cleaved by cathepsin CTSG. Cleavage at 41-Arg-|-Ser-42 by CTSG results in receptor activation while cleavage at 55-Phe-|-Trp-56 results in inhibition of receptor activation. Post-translationally, phosphorylated in the C-terminal tail; probably mediating desensitization prior to the uncoupling and internalization of the receptor. In terms of tissue distribution, platelets and vascular endothelial cells.

The protein resides in the cell membrane. Its function is as follows. High affinity receptor that binds the activated thrombin, leading to calcium release from intracellular stores. The thrombin-activated receptor signaling pathway is mediated through PTX-insensitive G proteins, activation of phospholipase C resulting in the production of 1D-myo-inositol 1,4,5-trisphosphate (InsP3) which binds to InsP3 receptors causing calcium release from the stores. In astrocytes, the calcium released into the cytosol allows the Ca(2+)-dependent release of L-glutamate into the synaptic cleft through BEST1, that targets the neuronal postsynaptic GRIN2A/NMDAR receptor resulting in the synaptic plasticity regulation. May play a role in platelets activation and in vascular development. Mediates up-regulation of pro-inflammatory cytokines, such as MCP-1/CCL2 and IL6, triggered by coagulation factor Xa (F10) in cardiac fibroblasts and umbilical vein endothelial cells. This chain is Proteinase-activated receptor 1, found in Homo sapiens (Human).